The chain runs to 121 residues: MARQNDMGREGESEARAYLVKHGYNVLHTNWHWHHYELDIIAVKEDELIVVEVKTRSEDFLLSPEDAVDTKKIRRIVAAADAYVRYFNIDLPVRFDIVTLIKKETGFLIDHIEDAFYAPCR.

This sequence belongs to the UPF0102 family.

The sequence is that of UPF0102 protein BDI_2565 from Parabacteroides distasonis (strain ATCC 8503 / DSM 20701 / CIP 104284 / JCM 5825 / NCTC 11152).